The chain runs to 149 residues: Nucleoside diphosphate kinase (149 aa).

The ATP site is built by Lys-11, Phe-59, Arg-87, Thr-93, Arg-104, and Asn-114. His-117 serves as the catalytic Pros-phosphohistidine intermediate.

This sequence belongs to the NDK family. As to quaternary structure, homotetramer. Mg(2+) is required as a cofactor.

The protein localises to the cytoplasm. The enzyme catalyses a 2'-deoxyribonucleoside 5'-diphosphate + ATP = a 2'-deoxyribonucleoside 5'-triphosphate + ADP. It catalyses the reaction a ribonucleoside 5'-diphosphate + ATP = a ribonucleoside 5'-triphosphate + ADP. Major role in the synthesis of nucleoside triphosphates other than ATP. The ATP gamma phosphate is transferred to the NDP beta phosphate via a ping-pong mechanism, using a phosphorylated active-site intermediate. In Treponema pallidum (strain Nichols), this protein is Nucleoside diphosphate kinase.